Consider the following 158-residue polypeptide: Transcription elongation factor GreA (158 aa).

The protein belongs to the GreA/GreB family.

Its function is as follows. Necessary for efficient RNA polymerase transcription elongation past template-encoded arresting sites. The arresting sites in DNA have the property of trapping a certain fraction of elongating RNA polymerases that pass through, resulting in locked ternary complexes. Cleavage of the nascent transcript by cleavage factors such as GreA or GreB allows the resumption of elongation from the new 3'terminus. GreA releases sequences of 2 to 3 nucleotides. The chain is Transcription elongation factor GreA from Ruthia magnifica subsp. Calyptogena magnifica.